Consider the following 38-residue polypeptide: Zinc-containing ferredoxin (38 aa).

Residues 1 to 11 (GIDPNFRTSRP) show a composition bias toward polar residues. The tract at residues 1-38 (GIDPNFRTSRPVTGDHAGHKVYAPADPPVKEKALGIHG) is disordered. The tract at residues 1–38 (GIDPNFRTSRPVTGDHAGHKVYAPADPPVKEKALGIHG) is N-terminal extension. The Zn(2+) site is built by His-16 and His-19. Basic and acidic residues predominate over residues 28–38 (PVKEKALGIHG). Residue Lys-30 is modified to N6-methyllysine. Residue His-37 coordinates Zn(2+).

[3Fe-4S] cluster serves as cofactor. The cofactor is [4Fe-4S] cluster. Zn(2+) is required as a cofactor.

Functionally, ferredoxins are iron-sulfur proteins that transfer electrons in a wide variety of metabolic reactions. This is Zinc-containing ferredoxin (zfx) from Metallosphaera prunae.